Consider the following 361-residue polypeptide: Lactate-binding periplasmic protein TTHA0766 (361 aa).

The segment at residues 1 to 22 is a signal peptide (tat-type signal); the sequence is MKRVSRRAFLRRLGVGVAATAA. Substrate contacts are provided by Tyr-101, Asn-158, and Arg-178. Asn-158 contributes to the Ca(2+) binding site. Ca(2+) is bound by residues Asp-216, Phe-217, and Gln-247. Residues Phe-217 and 247–250 each bind substrate; that span reads QPVD.

The protein belongs to the bacterial solute-binding protein 7 family. In terms of assembly, homodimer. The complex comprises the extracytoplasmic solute receptor protein TTHA0766, and the two putative transmembrane proteins TTHA0767 and TTHA0768.

It localises to the periplasm. In terms of biological role, part of the tripartite ATP-independent periplasmic (TRAP) transport system involved in the uptake of lactate. This protein specifically binds L-lactate. This is Lactate-binding periplasmic protein TTHA0766 from Thermus thermophilus (strain ATCC 27634 / DSM 579 / HB8).